Here is a 358-residue protein sequence, read N- to C-terminus: Magnesium-protoporphyrin IX monomethyl ester [oxidative] cyclase 3 (358 aa).

This sequence belongs to the AcsF family. Fe cation serves as cofactor.

It catalyses the reaction Mg-protoporphyrin IX 13-monomethyl ester + 3 NADPH + 3 O2 + 2 H(+) = 3,8-divinyl protochlorophyllide a + 3 NADP(+) + 5 H2O. It functions in the pathway porphyrin-containing compound metabolism; chlorophyll biosynthesis (light-independent). Its function is as follows. Catalyzes the formation of the isocyclic ring in chlorophyll biosynthesis. Mediates the cyclase reaction, which results in the formation of divinylprotochlorophyllide (Pchlide) characteristic of all chlorophylls from magnesium-protoporphyrin IX 13-monomethyl ester (MgPMME). The sequence is that of Magnesium-protoporphyrin IX monomethyl ester [oxidative] cyclase 3 from Nostoc sp. (strain PCC 7120 / SAG 25.82 / UTEX 2576).